Reading from the N-terminus, the 250-residue chain is 2,3-bisphosphoglycerate-dependent phosphoglycerate mutase (250 aa).

Residues 10–17 (RHGESVWN), 23–24 (TG), arginine 62, 89–92 (ERHY), lysine 100, 116–117 (RR), and 185–186 (GN) contribute to the substrate site. Histidine 11 acts as the Tele-phosphohistidine intermediate in catalysis. Residue glutamate 89 is the Proton donor/acceptor of the active site.

Belongs to the phosphoglycerate mutase family. BPG-dependent PGAM subfamily. Homodimer.

It carries out the reaction (2R)-2-phosphoglycerate = (2R)-3-phosphoglycerate. It functions in the pathway carbohydrate degradation; glycolysis; pyruvate from D-glyceraldehyde 3-phosphate: step 3/5. Functionally, catalyzes the interconversion of 2-phosphoglycerate and 3-phosphoglycerate. The polypeptide is 2,3-bisphosphoglycerate-dependent phosphoglycerate mutase (Proteus mirabilis (strain HI4320)).